A 70-amino-acid polypeptide reads, in one-letter code: Metallothionein-like protein 1 (70 aa).

It belongs to the metallothionein superfamily. Type 15 family.

Its function is as follows. Metallothioneins have a high content of cysteine residues that bind various heavy metals. The polypeptide is Metallothionein-like protein 1 (MT1) (Festuca rubra (Red fescue)).